The primary structure comprises 141 residues: ATP synthase epsilon chain (141 aa).

This sequence belongs to the ATPase epsilon chain family. F-type ATPases have 2 components, CF(1) - the catalytic core - and CF(0) - the membrane proton channel. CF(1) has five subunits: alpha(3), beta(3), gamma(1), delta(1), epsilon(1). CF(0) has three main subunits: a, b and c.

The protein resides in the cell membrane. Produces ATP from ADP in the presence of a proton gradient across the membrane. This is ATP synthase epsilon chain from Lactococcus lactis subsp. cremoris (strain MG1363).